A 175-amino-acid chain; its full sequence is ATP-dependent protease subunit HslV (175 aa).

Threonine 2 is an active-site residue. Positions 156, 159, and 162 each coordinate Na(+).

It belongs to the peptidase T1B family. HslV subfamily. As to quaternary structure, a double ring-shaped homohexamer of HslV is capped on each side by a ring-shaped HslU homohexamer. The assembly of the HslU/HslV complex is dependent on binding of ATP.

It is found in the cytoplasm. The enzyme catalyses ATP-dependent cleavage of peptide bonds with broad specificity.. With respect to regulation, allosterically activated by HslU binding. Protease subunit of a proteasome-like degradation complex believed to be a general protein degrading machinery. In Rhizobium rhizogenes (strain K84 / ATCC BAA-868) (Agrobacterium radiobacter), this protein is ATP-dependent protease subunit HslV.